We begin with the raw amino-acid sequence, 292 residues long: RWD domain-containing protein 2A (292 aa).

In terms of domain architecture, RWD spans 14-134 (LEMEMLFSMF…QWLQDNSASY (121 aa)).

This Homo sapiens (Human) protein is RWD domain-containing protein 2A (RWDD2A).